Here is a 307-residue protein sequence, read N- to C-terminus: Deaminated glutathione amidase, chloroplastic/cytosolic (307 aa).

The N-terminal 36 residues, 1–36 (MNAYSVSLDFTKPSLFTRITLSSQIPLTMATTVNKT), are a transit peptide targeting the chloroplast. In terms of domain architecture, CN hydrolase spans 37–286 (VRVAAAQMTS…TGIVVADIDF (250 aa)). Glu76 serves as the catalytic Proton acceptor. Residue Lys147 is the Proton donor of the active site. Cys188 serves as the catalytic Nucleophile.

It belongs to the nitrilase superfamily. NIT1/NIT2 family.

It localises to the plastid. The protein localises to the chloroplast. The protein resides in the cytoplasm. The catalysed reaction is N-(4-oxoglutaryl)-L-cysteinylglycine + H2O = L-cysteinylglycine + 2-oxoglutarate. The enzyme catalyses N-(4-carboxy-4-oxobutanoyl)-L-ethylglycylglycine + H2O = N-(2-aminobutanoyl)glycine + 2-oxoglutarate. Functionally, catalyzes the hydrolysis of the amide bond in N-(4-oxoglutarate)-L-cysteinylglycine (deaminated glutathione), a metabolite repair reaction to dispose of the harmful deaminated glutathione. Possesses amidase activity toward deaminated ophthalmate in vitro. The polypeptide is Deaminated glutathione amidase, chloroplastic/cytosolic (Arabidopsis thaliana (Mouse-ear cress)).